The chain runs to 361 residues: NAD(P)H-quinone oxidoreductase subunit 1, chloroplastic (361 aa).

A run of 6 helical transmembrane segments spans residues 25 to 45 (IWLLVPILTLVLGITIGVLVI), 102 to 122 (VAVVSILLSYSVIPFGYHLVL), 125 to 145 (LSIGVFLWIAISSIAPIGLLM), 246 to 266 (YSGIKFGLFYVASYLNLLVSS), 298 to 318 (VFGTTISLLITLAKAYLFLFI), and 334 to 354 (LLNLGWKSLLPIALGNLLLTT).

The protein belongs to the complex I subunit 1 family. As to quaternary structure, NDH is composed of at least 16 different subunits, 5 of which are encoded in the nucleus.

It is found in the plastid. Its subcellular location is the chloroplast thylakoid membrane. The enzyme catalyses a plastoquinone + NADH + (n+1) H(+)(in) = a plastoquinol + NAD(+) + n H(+)(out). The catalysed reaction is a plastoquinone + NADPH + (n+1) H(+)(in) = a plastoquinol + NADP(+) + n H(+)(out). Functionally, NDH shuttles electrons from NAD(P)H:plastoquinone, via FMN and iron-sulfur (Fe-S) centers, to quinones in the photosynthetic chain and possibly in a chloroplast respiratory chain. The immediate electron acceptor for the enzyme in this species is believed to be plastoquinone. Couples the redox reaction to proton translocation, and thus conserves the redox energy in a proton gradient. The polypeptide is NAD(P)H-quinone oxidoreductase subunit 1, chloroplastic (Nymphaea alba (White water-lily)).